The primary structure comprises 282 residues: Glutamate--LysW ligase ArgX (282 aa).

ATP contacts are provided by residues Lys-87, Lys-127, 131-137, and 167-178; these read GSWGRLV and QEYINYKSRDIR. Positions 91–277 constitute an ATP-grasp domain; it reads YSKLYREGIP…VAEELVSYVK (187 aa). Arg-192 is a binding site for substrate. An ATP-binding site is contributed by Asn-202. 203 to 204 contributes to the substrate binding site; sequence IA. The Mg(2+) site is built by Asp-237, Glu-250, and Asn-252. 256–260 is a binding site for substrate; the sequence is EFKGF. The GF motif that is essential for ArgX substrate specificity signature appears at 259-260; sequence GF.

It belongs to the RimK family. LysX subfamily. Homotetramer. Interacts with LysW. Requires Mg(2+) as cofactor.

It catalyses the reaction [amino-group carrier protein]-C-terminal-L-glutamate + L-glutamate + ATP = [amino-group carrier protein]-C-terminal-gamma-(L-glutamyl)-L-glutamate + ADP + phosphate + H(+). Its pathway is amino-acid biosynthesis; L-arginine biosynthesis. Its function is as follows. Catalyzes the ATP-dependent formation of a covalent bond between the amino group of glutamate and the gamma-carboxyl group of the C-terminal glutamate residue in LysW. This is Glutamate--LysW ligase ArgX from Sulfolobus acidocaldarius (strain ATCC 33909 / DSM 639 / JCM 8929 / NBRC 15157 / NCIMB 11770).